Here is a 153-residue protein sequence, read N- to C-terminus: ATP synthase subunit b' (153 aa).

The helical transmembrane segment at 20–40 (TLPLMAVQVVLLTFILNALFF) threads the bilayer.

It belongs to the ATPase B chain family. As to quaternary structure, F-type ATPases have 2 components, F(1) - the catalytic core - and F(0) - the membrane proton channel. F(1) has five subunits: alpha(3), beta(3), gamma(1), delta(1), epsilon(1). F(0) has four main subunits: a(1), b(1), b'(1) and c(10-14). The alpha and beta chains form an alternating ring which encloses part of the gamma chain. F(1) is attached to F(0) by a central stalk formed by the gamma and epsilon chains, while a peripheral stalk is formed by the delta, b and b' chains.

The protein localises to the cellular thylakoid membrane. Functionally, f(1)F(0) ATP synthase produces ATP from ADP in the presence of a proton or sodium gradient. F-type ATPases consist of two structural domains, F(1) containing the extramembraneous catalytic core and F(0) containing the membrane proton channel, linked together by a central stalk and a peripheral stalk. During catalysis, ATP synthesis in the catalytic domain of F(1) is coupled via a rotary mechanism of the central stalk subunits to proton translocation. Its function is as follows. Component of the F(0) channel, it forms part of the peripheral stalk, linking F(1) to F(0). The b'-subunit is a diverged and duplicated form of b found in plants and photosynthetic bacteria. This Prochlorococcus marinus (strain NATL2A) protein is ATP synthase subunit b'.